Reading from the N-terminus, the 225-residue chain is Cobalt transport protein CbiM (225 aa).

A run of 6 helical transmembrane segments spans residues 7–27 (VLPL…VAIA), 43–63 (PFVG…VPVP), 76–96 (LAAV…ALLI), 108–128 (TLGA…YFAF), 143–163 (FLAG…ALAL), and 175–195 (FTGV…LEGV).

This sequence belongs to the CbiM family. Forms an energy-coupling factor (ECF) transporter complex composed of an ATP-binding protein (A component, CbiO), a transmembrane protein (T component, CbiQ) and 2 possible substrate-capture proteins (S components, CbiM and CbiN) of unknown stoichimetry.

The protein resides in the cell inner membrane. It functions in the pathway cofactor biosynthesis; adenosylcobalamin biosynthesis. Part of the energy-coupling factor (ECF) transporter complex CbiMNOQ involved in cobalt import. The protein is Cobalt transport protein CbiM of Sorangium cellulosum (strain So ce56) (Polyangium cellulosum (strain So ce56)).